A 98-amino-acid polypeptide reads, in one-letter code: Small ribosomal subunit protein uS17 (98 aa).

Belongs to the universal ribosomal protein uS17 family. As to quaternary structure, part of the 30S ribosomal subunit.

In terms of biological role, one of the primary rRNA binding proteins, it binds specifically to the 5'-end of 16S ribosomal RNA. The polypeptide is Small ribosomal subunit protein uS17 (Synechococcus sp. (strain CC9605)).